The following is a 366-amino-acid chain: Left-right determination factor 1 (366 aa).

The signal sequence occupies residues 1-21; that stretch reads MQPLWLCWALWVLPLASPGAA. Positions 22 to 76 are cleaved as a propeptide — or 135; sequence LTGEQLLGSLLRQLQLKEVPTLDRADMEELVIPTHVRAQYVALLQRSHGDRSRGK. Asparagine 158 carries an N-linked (GlcNAc...) asparagine glycan. 4 disulfides stabilise this stretch: cysteine 251/cysteine 264, cysteine 263/cysteine 316, cysteine 293/cysteine 351, and cysteine 297/cysteine 353.

The protein belongs to the TGF-beta family. The processing of the protein may also occur at the second R-X-X-R site located at AA 132-135. Processing appears to be regulated in a cell-type specific manner.

It is found in the secreted. Functionally, required for left-right axis determination as a regulator of LEFTY2 and NODAL. This chain is Left-right determination factor 1 (LEFTY1), found in Homo sapiens (Human).